The sequence spans 146 residues: VHWTAEEKQLVTSLWTKVNVDECGGEALGRLLIVYPWTQRFFSSFGNLSSSTAICGNPRVKAHGKKVFTSFGEAVKNLDNIKATYAKLSELHCEKLHVDPQNFNLLGDIFIIVLAAHFGKDFTPACQAAWQKLVRVVAHALAYHYH.

The Globin domain maps to 2 to 146 (HWTAEEKQLV…VAHALAYHYH (145 aa)). Heme b-binding residues include H63 and H92.

Belongs to the globin family. As to quaternary structure, there are three forms of hemoglobin in Sphenodon: A, A' and D. Hb A is a tetramer of two alpha-A and two beta-1, Hb A' is a tetramer of two alpha-a and two beta-2, Hb D is a tetramer of two alpha-D and two beta-2.

Involved in oxygen transport from the lung to the various peripheral tissues. This is Hemoglobin subunit beta-2 (HBB2) from Sphenodon punctatus (Tuatara).